The primary structure comprises 721 residues: Catalase-peroxidase 1 (721 aa).

Positions 98–226 (WHAAGTYRIA…LAAVMMGLIY (129 aa)) form a cross-link, tryptophyl-tyrosyl-methioninium (Trp-Tyr) (with M-252). H99 (proton acceptor) is an active-site residue. Residues 226 to 252 (YVNPEGVDGQPDPLKTAHDVRVTFARM) constitute a cross-link (tryptophyl-tyrosyl-methioninium (Tyr-Met) (with W-98)). H267 lines the heme b pocket.

The protein belongs to the peroxidase family. Peroxidase/catalase subfamily. Homodimer or homotetramer. Requires heme b as cofactor. In terms of processing, formation of the three residue Trp-Tyr-Met cross-link is important for the catalase, but not the peroxidase activity of the enzyme.

The catalysed reaction is H2O2 + AH2 = A + 2 H2O. It carries out the reaction 2 H2O2 = O2 + 2 H2O. Functionally, bifunctional enzyme with both catalase and broad-spectrum peroxidase activity. The chain is Catalase-peroxidase 1 from Vibrio parahaemolyticus serotype O3:K6 (strain RIMD 2210633).